The primary structure comprises 62 residues: Sec-independent protein translocase protein TatA (62 aa).

The helical transmembrane segment at 1–21 threads the bilayer; the sequence is MFGIGIPELLVIFVLILLVFG.

It belongs to the TatA/E family. The Tat system comprises two distinct complexes: a TatABC complex, containing multiple copies of TatA, TatB and TatC subunits, and a separate TatA complex, containing only TatA subunits. Substrates initially bind to the TatABC complex, which probably triggers association of the separate TatA complex to form the active translocon.

Its subcellular location is the cell inner membrane. Its function is as follows. Part of the twin-arginine translocation (Tat) system that transports large folded proteins containing a characteristic twin-arginine motif in their signal peptide across membranes. TatA could form the protein-conducting channel of the Tat system. The polypeptide is Sec-independent protein translocase protein TatA (Oleidesulfovibrio alaskensis (strain ATCC BAA-1058 / DSM 17464 / G20) (Desulfovibrio alaskensis)).